A 562-amino-acid chain; its full sequence is Non-homologous end joining factor IFFO1 (562 aa).

Residues 65-116 (ALRNDLGSNINVLKTLNLRFRCFLAKVHELERRNRLLEKQLQQALEEGKQGR) are LMNA binding. An IF rod domain is found at 73 to 529 (NINVLKTLNL…RLITQSGDRK (457 aa)). Residues 85–117 (RCFLAKVHELERRNRLLEKQLQQALEEGKQGRR) are a coiled coil. Positions 154–187 (RVLGSPSRSPAGPLASSAACHTSSSTSTSTAFSS) are disordered. The span at 168–187 (ASSAACHTSSSTSTSTAFSS) shows a compositional bias: low complexity. A coiled-coil region spans residues 237–301 (EIRALYNVLA…MKVEQLKAEL (65 aa)). The disordered stretch occupies residues 364 to 401 (MGGRKRERKAAVEEDTSLSESDGPRQPEGAEEESTALS). The segment at 453 to 528 (EQEDSLEKVI…RRLITQSGDR (76 aa)) is XCCR4 binding. Required for localization to the double-strand breaks (DSBs). Residues 458 to 504 (LEKVIKDTESLFKTREKEYQETIDQIELELATAKNDMNRHLHEYMEM) are a coiled coil. Residues 523–562 (TQSGDRKSPAFTAVPLSDPPPPPSETEDSDRDVSSDSSMR) are disordered. A compositionally biased stretch (basic and acidic residues) spans 553-562 (RDVSSDSSMR).

Belongs to the intermediate filament family. In terms of assembly, forms a heterotetramer with XRCC4. The interaction with XRCC4 is direct, involves LIG4-free XRCC4 and leads to relocalization of IFFO1 at the double-strand break (DSB) sites. Interacts with LMNA; the interaction forms an interior nucleoskeleton and the recruitment to DNA double-strand breaks.

It localises to the nucleus. Its subcellular location is the nucleoplasm. It is found in the nucleus inner membrane. The protein localises to the nucleus matrix. Nuclear matrix protein involved in the immobilization of broken DNA ends and the suppression of chromosome translocation during DNA double-strand breaks (DSBs). Interacts with the nuclear lamina component LMNA, resulting in the formation of a nucleoskeleton that will relocalize to the DSB sites in a XRCC4-dependent manner and promote the immobilization of the broken ends, thereby preventing chromosome translocation. Acts as a scaffold that allows the DNA repair protein XRCC4 and LMNA to assemble into a complex at the DSB sites. This is Non-homologous end joining factor IFFO1 from Mus musculus (Mouse).